Reading from the N-terminus, the 475-residue chain is Lipoprotein lipase (475 aa).

The first 27 residues, 1 to 27 (MESKALLVLTLAVWLQSLTASRGGVAA), serve as a signal peptide directing secretion. The tract at residues 32–53 (RDFIDIESKFALRTPEDTAEDT) is interaction with GPIHBP1. C54 and C67 are joined by a disulfide. N-linked (GlcNAc...) asparagine glycosylation occurs at N70. Y121 bears the 3'-nitrotyrosine mark. The active-site Nucleophile is S159. D183 (charge relay system) is an active-site residue. A 3'-nitrotyrosine modification is found at Y191. Residues A194, R197, S199, and D202 each coordinate Ca(2+). An intrachain disulfide couples C243 to C266. An essential for determining substrate specificity region spans residues 243–266 (CNIGEAIRVIAERGLGDVDQLVKC). The active-site Charge relay system is the H268. 2 cysteine pairs are disulfide-bonded: C291–C310 and C302–C305. Residues 341 to 464 (FHYQVKIHFS…KGKAPAVFVK (124 aa)) form the PLAT domain. At Y343 the chain carries 3'-nitrotyrosine. The N-linked (GlcNAc...) asparagine glycan is linked to N386. The interval 417 to 421 (WSDWW) is important for interaction with lipoprotein particles. The interval 430 to 434 (KIRVK) is important for heparin binding. The interaction with GPIHBP1 stretch occupies residues 443–467 (IFCSREKVSHLQKGKAPAVFVKCHD). C445 and C465 are disulfide-bonded.

The protein belongs to the AB hydrolase superfamily. Lipase family. Homodimer. Interacts with GPIHBP1 with 1:1 stoichiometry. Interacts with APOC2; the interaction activates LPL activity in the presence of lipids. Interaction with heparan sulfate proteoglycans is required to protect LPL against loss of activity. Associates with lipoprotein particles in blood plasma. Interacts with LMF1 and SEL1L; interaction with SEL1L is required to prevent aggregation of newly synthesized LPL in the endoplasmic reticulum (ER), and for normal export of LPL from the ER to the extracellular space. Interacts with SORL1; SORL1 acts as a sorting receptor, promoting LPL localization to endosomes and later to lysosomes, leading to degradation of newly synthesized LPL. Post-translationally, tyrosine nitration after lipopolysaccharide (LPS) challenge down-regulates the lipase activity. As to expression, detected in blood plasma. Detected in milk (at protein level).

It is found in the cell membrane. It localises to the secreted. The protein resides in the extracellular space. Its subcellular location is the extracellular matrix. The catalysed reaction is a triacylglycerol + H2O = a diacylglycerol + a fatty acid + H(+). It carries out the reaction a 1,2-diacyl-sn-glycero-3-phosphocholine + H2O = a 2-acyl-sn-glycero-3-phosphocholine + a fatty acid + H(+). It catalyses the reaction 1,2,3-tri-(9Z-octadecenoyl)-glycerol + H2O = di-(9Z)-octadecenoylglycerol + (9Z)-octadecenoate + H(+). The enzyme catalyses 1,2-di-(9Z-octadecenoyl)-sn-glycero-3-phosphocholine + H2O = (9Z-octadecenoyl)-sn-glycero-3-phosphocholine + (9Z)-octadecenoate + H(+). The catalysed reaction is 1,2,3-tributanoylglycerol + H2O = dibutanoylglycerol + butanoate + H(+). It carries out the reaction 1,2-dihexadecanoyl-sn-glycero-3-phosphocholine + H2O = hexadecanoyl-sn-glycero-3-phosphocholine + hexadecanoate + H(+). Its activity is regulated as follows. The apolipoprotein APOC2 acts as a coactivator of LPL activity. Ca(2+) binding promotes protein stability and formation of the active homodimer. Interaction with GPIHBP1 protects LPL against inactivation by ANGPTL4. Inhibited by NaCl. Its function is as follows. Key enzyme in triglyceride metabolism. Catalyzes the hydrolysis of triglycerides from circulating chylomicrons and very low density lipoproteins (VLDL), and thereby plays an important role in lipid clearance from the blood stream, lipid utilization and storage. Although it has both phospholipase and triglyceride lipase activities it is primarily a triglyceride lipase with low but detectable phospholipase activity. Mediates margination of triglyceride-rich lipoprotein particles in capillaries. Recruited to its site of action on the luminal surface of vascular endothelium by binding to GPIHBP1 and cell surface heparan sulfate proteoglycans. The sequence is that of Lipoprotein lipase (LPL) from Homo sapiens (Human).